Here is a 538-residue protein sequence, read N- to C-terminus: Ribosome-associated complex subunit SSZ1 (538 aa).

The segment at 400 to 538 is peptide-binding domain; sequence PVIVNTPHLK…KTGNAVKGEL (139 aa). The interval 464–484 is disordered; the sequence is PIPKEENAEEDDESEWSDDEP. Residues 470-484 show a composition bias toward acidic residues; it reads NAEEDDESEWSDDEP. Phosphoserine is present on residues serine 477 and serine 480.

This sequence belongs to the heat shock protein 70 family. As to quaternary structure, RAC is a heterodimer of the Hsp70/DnaK-type chaperone SSZ1 and the Hsp40/DnaJ-type chaperone ZUO1. RAC associates with ribosomes via ZUO1.

It localises to the cytoplasm. Functionally, component of the ribosome-associated complex (RAC), a heterodimeric chaperone complex involved in regulation of accurate translation termination and in folding or maintaining nascent polypeptides in a folding-competent state. RAC stimulates the ATPase activity of the ribosome-associated pool of Hsp70-type chaperones SSB1/SSB2 that bind to the nascent polypeptide chain. SSZ1 is required for ZUO1 to function efficiently as a J-protein for SSB1/SSB2. Also involved in pleiotropic drug resistance by post-translational activation of transcription factor PDR1. The protein is Ribosome-associated complex subunit SSZ1 (SSZ1) of Saccharomyces cerevisiae (strain ATCC 204508 / S288c) (Baker's yeast).